The sequence spans 243 residues: Proteasome subunit beta (243 aa).

The propeptide at 1-49 (MRTPTGDLSDGPAEELGRDQPVFGPEIGEFEHSERRAAQADGEGEMKTG) is removed in mature form; by autocatalysis. The interval 1–50 (MRTPTGDLSDGPAEELGRDQPVFGPEIGEFEHSERRAAQADGEGEMKTGT) is disordered. The segment covering 29–38 (EFEHSERRAA) has biased composition (basic and acidic residues). The active-site Nucleophile is T50.

Belongs to the peptidase T1B family. As to quaternary structure, the 20S proteasome core is composed of 14 alpha and 14 beta subunits that assemble into four stacked heptameric rings, resulting in a barrel-shaped structure. The two inner rings, each composed of seven catalytic beta subunits, are sandwiched by two outer rings, each composed of seven alpha subunits. The catalytic chamber with the active sites is on the inside of the barrel. Has a gated structure, the ends of the cylinder being occluded by the N-termini of the alpha-subunits. Is capped at one or both ends by the proteasome regulatory ATPase, PAN.

It localises to the cytoplasm. The catalysed reaction is Cleavage of peptide bonds with very broad specificity.. Its activity is regulated as follows. The formation of the proteasomal ATPase PAN-20S proteasome complex, via the docking of the C-termini of PAN into the intersubunit pockets in the alpha-rings, triggers opening of the gate for substrate entry. Interconversion between the open-gate and close-gate conformations leads to a dynamic regulation of the 20S proteasome proteolysis activity. Functionally, component of the proteasome core, a large protease complex with broad specificity involved in protein degradation. In Halorubrum lacusprofundi (strain ATCC 49239 / DSM 5036 / JCM 8891 / ACAM 34), this protein is Proteasome subunit beta.